A 74-amino-acid chain; its full sequence is Toxin BmKaTx17 (74 aa).

An N-terminal signal peptide occupies residues 1-8 (LLMTGVES). Residues 10 to 72 (RDAYIAKNYN…KPIRIPGKCH (63 aa)) form the LCN-type CS-alpha/beta domain. 4 disulfide bridges follow: Cys20/Cys71, Cys24/Cys44, Cys30/Cys54, and Cys34/Cys56. The propeptide at 73–74 (RR) is removed by a carboxypeptidase.

The protein belongs to the long (4 C-C) scorpion toxin superfamily. Sodium channel inhibitor family. Alpha subfamily. Expressed by the venom gland.

It localises to the secreted. Its function is as follows. Alpha toxins bind voltage-independently at site-3 of sodium channels (Nav) and inhibit the inactivation of the activated channels, thereby blocking neuronal transmission. This chain is Toxin BmKaTx17, found in Olivierus martensii (Manchurian scorpion).